A 176-amino-acid chain; its full sequence is ATP-dependent protease subunit HslV (176 aa).

Thr-6 is an active-site residue. Residues Ser-161, Cys-164, and Thr-167 each contribute to the Na(+) site.

It belongs to the peptidase T1B family. HslV subfamily. A double ring-shaped homohexamer of HslV is capped on each side by a ring-shaped HslU homohexamer. The assembly of the HslU/HslV complex is dependent on binding of ATP.

It is found in the cytoplasm. It catalyses the reaction ATP-dependent cleavage of peptide bonds with broad specificity.. Allosterically activated by HslU binding. Functionally, protease subunit of a proteasome-like degradation complex believed to be a general protein degrading machinery. This is ATP-dependent protease subunit HslV from Thermosipho melanesiensis (strain DSM 12029 / CIP 104789 / BI429).